The sequence spans 185 residues: Transcription termination/antitermination protein NusG (185 aa).

The region spanning 134-164 is the KOW domain; the sequence is VGKRVRIVDGAFSGFEAPITEINGDKLTLTV.

This sequence belongs to the NusG family.

In terms of biological role, participates in transcription elongation, termination and antitermination. The protein is Transcription termination/antitermination protein NusG of Lactococcus lactis subsp. lactis (strain IL1403) (Streptococcus lactis).